A 737-amino-acid chain; its full sequence is Translation initiation factor IF-2 (737 aa).

The span at 69-80 (EKKEEKPIRKIM) shows a compositional bias: basic and acidic residues. Residues 69 to 130 (EKKEEKPIRK…HKNKGKKKKG (62 aa)) are disordered. 2 stretches are compositionally biased toward basic residues: residues 95–108 (NNKKAKFQQTKNKK) and 121–130 (HKNKGKKKKG). The 168-residue stretch at 237 to 404 (ERPPVITIMG…TILITAEILE (168 aa)) folds into the tr-type G domain. Residues 246–253 (GHVDHGKT) are G1. 246-253 (GHVDHGKT) is a binding site for GTP. Residues 271-275 (GITQK) are G2. The tract at residues 292-295 (DTPG) is G3. GTP is bound by residues 292-296 (DTPGH) and 346-349 (NKID). Positions 346 to 349 (NKID) are G4. A G5 region spans residues 382-384 (SAK).

This sequence belongs to the TRAFAC class translation factor GTPase superfamily. Classic translation factor GTPase family. IF-2 subfamily.

The protein localises to the cytoplasm. One of the essential components for the initiation of protein synthesis. Protects formylmethionyl-tRNA from spontaneous hydrolysis and promotes its binding to the 30S ribosomal subunits. Also involved in the hydrolysis of GTP during the formation of the 70S ribosomal complex. This Fusobacterium nucleatum subsp. nucleatum (strain ATCC 25586 / DSM 15643 / BCRC 10681 / CIP 101130 / JCM 8532 / KCTC 2640 / LMG 13131 / VPI 4355) protein is Translation initiation factor IF-2.